A 59-amino-acid chain; its full sequence is Dendroaspin (59 aa).

4 disulfides stabilise this stretch: C3–C22, C17–C37, C39–C51, and C52–C57. The Cell attachment site motif lies at 43-45; the sequence is RGD.

The protein belongs to the three-finger toxin family. Short-chain subfamily. Antiplatelet toxin sub-subfamily. As to expression, expressed by the venom gland.

It is found in the secreted. In terms of biological role, inhibits ADP-induced platelet aggregation and inhibits the binding of purified platelet fibrinogen receptor alpha-IIb/beta-3 (ITGA2B/ITGB3) to immobilized fibrinogen. Has also been described to inhibit cell adhesion to fibrinogen, fibronectin, laminin and collagen. This Dendroaspis jamesoni kaimosae (Eastern Jameson's mamba) protein is Dendroaspin.